Reading from the N-terminus, the 299-residue chain is Protease HtpX homolog (299 aa).

The next 2 helical transmembrane spans lie at 15-35 (ILLLVFFLLLALVGYAVGYLF) and 39-59 (GLGGLVIALIIGFIYALSMIF). H143 provides a ligand contact to Zn(2+). E144 is an active-site residue. H147 lines the Zn(2+) pocket. The next 2 membrane-spanning stretches (helical) occupy residues 158–178 (IAVALASAITMLSSMAGRMMW) and 198–218 (IIMLVVSLLAIVLAPLAATLV). Zn(2+) is bound at residue E227.

The protein belongs to the peptidase M48B family. Zn(2+) serves as cofactor.

It localises to the cell membrane. This chain is Protease HtpX homolog, found in Streptococcus pneumoniae serotype 4 (strain ATCC BAA-334 / TIGR4).